Consider the following 201-residue polypeptide: Female-specific protein transformer (201 aa).

The tract at residues 1 to 117 (MDADSSSRSP…RSRSRSRTPR (117 aa)) is disordered. The span at 9–37 (SPRDTRTCARPKEKVPYFADEGRERDRVR) shows a compositional bias: basic and acidic residues. Basic residues-rich tracts occupy residues 38-62 (NLRHRKTSITRPTTSHRGRPMRARS) and 99-115 (KQRRRRSRSRSRSRSRT).

It localises to the nucleus speckle. In terms of biological role, member of the regulatory pathway controlling female somatic sexual differentiation, regulated by Sxl. Activates dsx female-specific splicing by promoting the formation of a splicing enhancer complex which consists of tra, tra2 and sr proteins. The sequence is that of Female-specific protein transformer (tra) from Drosophila hydei (Fruit fly).